We begin with the raw amino-acid sequence, 599 residues long: MAASADLSKSSPTPNGIPSSDTANDTMDPFHACSILKQLKTMYDEGQLTDIVVEVDHGKTFSCHRNVLAAISPYFRSMFTSGLTESTQKEVRIIGVEAESMDLVLNYAYTSRVILTEANVQALFTTASIFQIPSIQDQCAKYMISHLDPQNSIGVFIFADHYGHQELGDRSKEYIRKKFLCVTKEQEFLQLTKDQLISILDSDDLNVDREEHVYESIIRWFEHEQSEREVHLPEIFAKCIRFPLMEDTFIEKIPPQFAQAIVKSCGEPSNTSGCTQRLGMTASEMIICFDAAHKHSGKKQTVPCLDIVTGRVFKLCKPPNDLREVGILVSPDNDIYIAGGYRPSSSEVSIDHKAENDFWMYDHSTNRWLSKPSLLRARIGCKLVYCCGKMYAIGGRVYEGDGRNSLKSVECYDSRENCWMTVCAMPVAMEFHNAVEHKEKIYVLQGEFFLFYEPQKDYWGFLTPMTVPRIQGLAAVYKDSIYYIAGTCGNHQRVFTVEAYDIELNKWTRKKDFPCDQSINPYLKLVLFQNKLHLFVRATQVTVEEHIFRTSRKNSLYQYDDIADQWMKVYETPDRLWDLGRHFECAVAKLYPQCLQKVL.

A disordered region spans residues 1-25 (MAASADLSKSSPTPNGIPSSDTAND). Positions 7–25 (LSKSSPTPNGIPSSDTAND) are enriched in polar residues. Positions 49 to 117 (TDIVVEVDHG…AYTSRVILTE (69 aa)) constitute a BTB domain. The BACK domain maps to 152–254 (SIGVFIFADH…MEDTFIEKIP (103 aa)). 5 Kelch repeats span residues 334-388 (DIYI…YCCG), 389-439 (KMYA…EHKE), 441-479 (IYVLQGEFFLFYEPQKDYWGFLTPMTVPRIQGLAAVYKD), 481-530 (IYYI…LFQN), and 540-586 (QVTV…FECA).

This sequence belongs to the KBTBD8 family. In terms of assembly, component of the BCR(KBTBD8) E3 ubiquitin ligase complex, at least composed of CUL3, KBTBD8 and RBX1.

Its subcellular location is the cytoplasm. The protein localises to the cytoskeleton. It is found in the spindle. The protein resides in the golgi apparatus. In terms of biological role, substrate-specific adapter of a BCR (BTB-CUL3-RBX1) E3 ubiquitin ligase complex that acts as a regulator of neural crest specification. The BCR(KBTBD8) complex acts by mediating monoubiquitination of NOLC1 and TCOF1: monoubiquitination promotes the formation of a NOLC1-TCOF1 complex that acts as a platform to connect RNA polymerase I with enzymes responsible for ribosomal processing and modification, leading to remodel the translational program of differentiating cells in favor of neural crest specification. In Mus musculus (Mouse), this protein is Kelch repeat and BTB domain-containing protein 8 (Kbtbd8).